A 247-amino-acid chain; its full sequence is Geranylgeranylglyceryl phosphate synthase (247 aa).

Positions 23 and 52 each coordinate Mg(2+). Sn-glycerol 1-phosphate is bound by residues 171–177, 203–204, and 225–226; these read YLEAGSG, GG, and GT.

The protein belongs to the GGGP/HepGP synthase family. Group II subfamily. Mg(2+) serves as cofactor.

The protein localises to the cytoplasm. It catalyses the reaction sn-glycerol 1-phosphate + (2E,6E,10E)-geranylgeranyl diphosphate = sn-3-O-(geranylgeranyl)glycerol 1-phosphate + diphosphate. The protein operates within membrane lipid metabolism; glycerophospholipid metabolism. Functionally, prenyltransferase that catalyzes the transfer of the geranylgeranyl moiety of geranylgeranyl diphosphate (GGPP) to the C3 hydroxyl of sn-glycerol-1-phosphate (G1P). This reaction is the first ether-bond-formation step in the biosynthesis of archaeal membrane lipids. The protein is Geranylgeranylglyceryl phosphate synthase of Methanococcoides burtonii (strain DSM 6242 / NBRC 107633 / OCM 468 / ACE-M).